A 398-amino-acid polypeptide reads, in one-letter code: Bifunctional enzyme IspD/IspF (398 aa).

Residues 1–234 (MPSSKRTAAI…ARLAAALGDI (234 aa)) form a 2-C-methyl-D-erythritol 4-phosphate cytidylyltransferase region. Residues 235–398 (RTGTGYDVHA…LPWNDKGRDT (164 aa)) form a 2-C-methyl-D-erythritol 2,4-cyclodiphosphate synthase region. D241 and H243 together coordinate a divalent metal cation. 4-CDP-2-C-methyl-D-erythritol 2-phosphate-binding positions include 241-243 (DVH) and 267-268 (HS). H275 provides a ligand contact to a divalent metal cation. 4-CDP-2-C-methyl-D-erythritol 2-phosphate contacts are provided by residues 289–291 (DIG), 365–368 (TTSE), F372, and R375.

In the N-terminal section; belongs to the IspD/TarI cytidylyltransferase family. IspD subfamily. It in the C-terminal section; belongs to the IspF family. Requires a divalent metal cation as cofactor.

It carries out the reaction 2-C-methyl-D-erythritol 4-phosphate + CTP + H(+) = 4-CDP-2-C-methyl-D-erythritol + diphosphate. The enzyme catalyses 4-CDP-2-C-methyl-D-erythritol 2-phosphate = 2-C-methyl-D-erythritol 2,4-cyclic diphosphate + CMP. The protein operates within isoprenoid biosynthesis; isopentenyl diphosphate biosynthesis via DXP pathway; isopentenyl diphosphate from 1-deoxy-D-xylulose 5-phosphate: step 2/6. It participates in isoprenoid biosynthesis; isopentenyl diphosphate biosynthesis via DXP pathway; isopentenyl diphosphate from 1-deoxy-D-xylulose 5-phosphate: step 4/6. In terms of biological role, bifunctional enzyme that catalyzes the formation of 4-diphosphocytidyl-2-C-methyl-D-erythritol from CTP and 2-C-methyl-D-erythritol 4-phosphate (MEP) (IspD), and catalyzes the conversion of 4-diphosphocytidyl-2-C-methyl-D-erythritol 2-phosphate (CDP-ME2P) to 2-C-methyl-D-erythritol 2,4-cyclodiphosphate (ME-CPP) with a corresponding release of cytidine 5-monophosphate (CMP) (IspF). The polypeptide is Bifunctional enzyme IspD/IspF (Nitrobacter winogradskyi (strain ATCC 25391 / DSM 10237 / CIP 104748 / NCIMB 11846 / Nb-255)).